Here is a 496-residue protein sequence, read N- to C-terminus: Probable cytosol aminopeptidase (496 aa).

The Mn(2+) site is built by lysine 264 and aspartate 269. Lysine 276 is an active-site residue. The Mn(2+) site is built by aspartate 287, aspartate 346, and glutamate 348. Arginine 350 is a catalytic residue.

This sequence belongs to the peptidase M17 family. The cofactor is Mn(2+).

The protein resides in the cytoplasm. The catalysed reaction is Release of an N-terminal amino acid, Xaa-|-Yaa-, in which Xaa is preferably Leu, but may be other amino acids including Pro although not Arg or Lys, and Yaa may be Pro. Amino acid amides and methyl esters are also readily hydrolyzed, but rates on arylamides are exceedingly low.. The enzyme catalyses Release of an N-terminal amino acid, preferentially leucine, but not glutamic or aspartic acids.. Functionally, presumably involved in the processing and regular turnover of intracellular proteins. Catalyzes the removal of unsubstituted N-terminal amino acids from various peptides. The polypeptide is Probable cytosol aminopeptidase (Geobacter sulfurreducens (strain ATCC 51573 / DSM 12127 / PCA)).